A 798-amino-acid polypeptide reads, in one-letter code: Ubiquitin carboxyl-terminal hydrolase 10 (798 aa).

Alanine 2 carries the N-acetylalanine modification. Residues 2-100 form an interaction with p53/TP53 region; it reads ALHSPQYIFG…ILGCTASKIT (99 aa). Residues 6–21 are G3BP1-binding; that stretch reads PQYIFGDFSPDEFNQF. The residue at position 24 (threonine 24) is a Phosphothreonine. Residue threonine 42 is modified to Phosphothreonine; by ATM. Phosphothreonine is present on threonine 100. Disordered stretches follow at residues 139 to 166, 194 to 257, and 307 to 337; these read GVSGGLGQRERKKKKKRPPGYYSYLKDG, AEFM…CFPA, and TESIDLDPTKPESASPPADGTGSASGTLPVS. Residues 205 to 219 show a composition bias toward polar residues; it reads TPRTCNSPQNSTDSV. Phosphoserine is present on residues serine 211 and serine 226. The span at 307 to 316 shows a compositional bias: basic and acidic residues; the sequence is TESIDLDPTK. Residue serine 321 is modified to Phosphoserine. Over residues 328–337 the composition is skewed to polar residues; that stretch reads GSASGTLPVS. Serine 337 carries the phosphoserine; by ATM modification. Residues serine 365 and serine 370 each carry the phosphoserine modification. Residues 415–795 enclose the USP domain; sequence RGLINKGNWC…TAYLLYYRRV (381 aa). The active-site Nucleophile is cysteine 424. Residue serine 547 is modified to Phosphoserine. A compositionally biased stretch (polar residues) spans 551–562; the sequence is EKLTISNGPKNH. Positions 551–594 are disordered; sequence EKLTISNGPKNHSVNEEEQEEQGEGSEDEWEQVGPRNKTSVTRQ. 2 positions are modified to phosphoserine: serine 563 and serine 576. Over residues 566 to 581 the composition is skewed to acidic residues; that stretch reads EEEQEEQGEGSEDEWE. Histidine 749 functions as the Proton acceptor in the catalytic mechanism.

It belongs to the peptidase C19 family. USP10 subfamily. In terms of assembly, found in a deubiquitination complex with TANK, USP10 and ZC3H12A; this complex inhibits genotoxic stress- or interleukin-1-beta (IL1B)-mediated NF-kappa-B activation by promoting IKBKG or TRAF6 deubiquitination. Interacts with IKBKG; this interaction increases in response to DNA damage. Interacts with TANK; this interaction increases in response to DNA damage. Interacts with TRAF6; this interaction increases in response to DNA damage. Interacts with ZC3H12A; this interaction increases in response to DNA damage. Interacts with G3BP1 (via NTF2 domain) and G3BP2 (via NTF2 domain); inhibiting stress granule formation. In terms of processing, phosphorylated by ATM following DNA damage, leading to stabilization and translocation it to the nucleus. Post-translationally, ubiquitinated. Deubiquitinated by USP13. As to expression, widely expressed.

Its subcellular location is the cytoplasm. It is found in the nucleus. The protein resides in the early endosome. It catalyses the reaction Thiol-dependent hydrolysis of ester, thioester, amide, peptide and isopeptide bonds formed by the C-terminal Gly of ubiquitin (a 76-residue protein attached to proteins as an intracellular targeting signal).. With respect to regulation, specifically inhibited by spautin-1 (specific and potent autophagy inhibitor-1), a derivative of MBCQ that binds to USP10 and inhibits deubiquitinase activity. Regulated by PIK3C3/VPS34-containing complexes. Functionally, hydrolase that can remove conjugated ubiquitin from target proteins such as p53/TP53, RPS2/us5, RPS3/us3, RPS10/eS10, BECN1, SNX3 and CFTR. Acts as an essential regulator of p53/TP53 stability: in unstressed cells, specifically deubiquitinates p53/TP53 in the cytoplasm, leading to counteract MDM2 action and stabilize p53/TP53. Following DNA damage, translocates to the nucleus and deubiquitinates p53/TP53, leading to regulate the p53/TP53-dependent DNA damage response. Component of a regulatory loop that controls autophagy and p53/TP53 levels: mediates deubiquitination of BECN1, a key regulator of autophagy, leading to stabilize the PIK3C3/VPS34-containing complexes. In turn, PIK3C3/VPS34-containing complexes regulate USP10 stability, suggesting the existence of a regulatory system by which PIK3C3/VPS34-containing complexes regulate p53/TP53 protein levels via USP10 and USP13. Does not deubiquitinate MDM2. Plays a key role in 40S ribosome subunit recycling when a ribosome has stalled during translation: acts both by inhibiting formation of stress granules, which store stalled translation pre-initiation complexes, and mediating deubiquitination of 40S ribosome subunits. Acts as a negative regulator of stress granules formation by lowering G3BP1 and G3BP2 valence, thereby preventing G3BP1 and G3BP2 ability to undergo liquid-liquid phase separation (LLPS) and assembly of stress granules. Promotes 40S ribosome subunit recycling following ribosome dissociation in response to ribosome stalling by mediating deubiquitination of 40S ribosomal proteins RPS2/us5, RPS3/us3 and RPS10/eS10, thereby preventing their degradation by the proteasome. Part of a ribosome quality control that takes place when ribosomes have stalled during translation initiation (iRQC): USP10 acts by removing monoubiquitination of RPS2/us5 and RPS3/us3, promoting 40S ribosomal subunit recycling. Deubiquitinates CFTR in early endosomes, enhancing its endocytic recycling. Involved in a TANK-dependent negative feedback response to attenuate NF-kappa-B activation via deubiquitinating IKBKG or TRAF6 in response to interleukin-1-beta (IL1B) stimulation or upon DNA damage. Deubiquitinates TBX21 leading to its stabilization. Plays a negative role in the RLR signaling pathway upon RNA virus infection by blocking the RIGI-mediated MAVS activation. Mechanistically, removes the unanchored 'Lys-63'-linked polyubiquitin chains of MAVS to inhibit its aggregation, essential for its activation. The polypeptide is Ubiquitin carboxyl-terminal hydrolase 10 (Homo sapiens (Human)).